The sequence spans 629 residues: Mitochondrial Rho GTPase 1 (629 aa).

At 1 to 600 (MSTAVRICVC…PRSEEPPADR (600 aa)) the chain is on the cytoplasmic side. In terms of domain architecture, Miro 1 spans 2 to 170 (STAVRICVCG…FYLCQKAVTH (169 aa)). Residues 11–18 (GDEGTGKS), 59–63 (DTSAR), and 115–118 (NKSD) contribute to the GTP site. 2 EF-hand domains span residues 186 to 221 (ACVDALRRIFFLSDKDQDGYLNDQEMQDFQQKSFDK) and 306 to 341 (AGYRFFMDLFLTFDKDNDGGLNDRELAALFAPTPGL). Aspartate 199, aspartate 201, aspartate 203, tyrosine 205, glutamate 210, aspartate 319, aspartate 321, aspartate 323, and glutamate 330 together coordinate Ca(2+). The region spanning 421–585 (RNVVLCYILG…FVALAEAATN (165 aa)) is the Miro 2 domain. Residues 430-437 (GSSGAGKS), 466-470 (ELQGG), and 535-538 (LKAD) contribute to the GTP site. A helical; Anchor for type IV membrane protein transmembrane segment spans residues 601–621 (ASLYMALGATACAALAAFMIW). Residues 622 to 629 (RRSTSNAA) lie on the Mitochondrial intermembrane side of the membrane.

This sequence belongs to the mitochondrial Rho GTPase family.

The protein resides in the mitochondrion outer membrane. In terms of biological role, mitochondrial GTPase involved in mitochondrial trafficking. Probably involved in control of anterograde transport of mitochondria and their subcellular distribution. This chain is Mitochondrial Rho GTPase 1 (gem-1), found in Neurospora crassa (strain ATCC 24698 / 74-OR23-1A / CBS 708.71 / DSM 1257 / FGSC 987).